An 83-amino-acid chain; its full sequence is Kappa-actitoxin-Aer3a (83 aa).

The first 22 residues, 1–22 (MKGQMIICLVLIALCMSVVVMA), serve as a signal peptide directing secretion. Residues 23-49 (QNLRAEELEKANPKDERVRSFERNQKR) constitute a propeptide that is removed on maturation. Residues 51 to 83 (CKDYLPKSECTQFRCRTSMKYKYTNCKKTCGTC) form the ShKT domain. Cystine bridges form between cysteine 51/cysteine 83, cysteine 60/cysteine 76, and cysteine 65/cysteine 80.

The protein belongs to the sea anemone type 1 potassium channel toxin family. Type 1a subfamily.

The protein localises to the secreted. The protein resides in the nematocyst. Specifically, dose-dependently and potently blocks the voltage-gated potassium channel Kv1.1/KCNA1 (Ki=1.6 pM). Moderately blocks potassium channel heterotetramers formed by 3 subunits of Kv1.1/KCNA1 and 1 subunit of Kv1.2/KCNA2 (Ki=56 nM) and weakly blocks those formed by 2 subunits of Kv1.1/KCNA1 and 2 subunits of Kv1.2/KCNA2 (Ki=14 nM). This Anemonia erythraea (Sea anemone) protein is Kappa-actitoxin-Aer3a.